We begin with the raw amino-acid sequence, 96 residues long: MGSSKLLVAFTLIVMMTISYDLFTGIGIDARTVPPTCYESCNATFQNPECNKMCVGLAYKDGSCIYPPPEVDGLPPKRPYFPRCCCNPIILSPPSP.

The N-terminal stretch at 1 to 19 is a signal peptide; the sequence is MGSSKLLVAFTLIVMMTIS. 4 disulfides stabilise this stretch: Cys-37–Cys-86, Cys-41–Cys-64, Cys-50–Cys-84, and Cys-54–Cys-85.

The protein belongs to the DEFL family.

It localises to the secreted. In Arabidopsis thaliana (Mouse-ear cress), this protein is Defensin-like protein 69.